A 203-amino-acid polypeptide reads, in one-letter code: Recombination protein RecR (203 aa).

The segment at 57–73 adopts a C4-type zinc-finger fold; it reads CQSCGTLKSNSLGCNNC. One can recognise a Toprim domain in the interval 81–175; it reads NKICVVEDIA…KVTKLAQGLP (95 aa).

The protein belongs to the RecR family.

Functionally, may play a role in DNA repair. It seems to be involved in an RecBC-independent recombinational process of DNA repair. It may act with RecF and RecO. This is Recombination protein RecR from Pelagibacter ubique (strain HTCC1062).